Here is a 924-residue protein sequence, read N- to C-terminus: Type II inositol 3,4-bisphosphate 4-phosphatase (924 aa).

Residues 1 to 13 (MEIKEEGASEEGQ) are compositionally biased toward basic and acidic residues. Disordered stretches follow at residues 1–25 (MEIKEEGASEEGQHFLPTAQASDPG), 481–516 (ILKKPPSPKSSTEESSPQDQPPLMRGQDSIPHHSDY), and 546–569 (DGGSEGSGGNNDGEKEPSLADAIP). The C2 domain maps to 23–165 (DPGDCQFTSI…LKSKEQLLVL (143 aa)).

Belongs to the inositol 3,4-bisphosphate 4-phosphatase family.

It carries out the reaction a 1,2-diacyl-sn-glycero-3-phospho-(1D-myo-inositol-3,4-bisphosphate) + H2O = a 1,2-diacyl-sn-glycero-3-phospho-(1D-myo-inositol-3-phosphate) + phosphate. It catalyses the reaction 1D-myo-inositol 1,3,4-trisphosphate + H2O = 1D-myo-inositol 1,3-bisphosphate + phosphate. The enzyme catalyses 1D-myo-inositol 3,4-bisphosphate + H2O = 1D-myo-inositol 3-phosphate + phosphate. It functions in the pathway signal transduction; phosphatidylinositol signaling pathway. Strongly inhibited by inositol hexakisphosphate. Catalyzes the hydrolysis of the 4-position phosphate of phosphatidylinositol 3,4-bisphosphate, inositol 1,3,4-trisphosphate and inositol 3,4-bisphosphate. Plays a role in the late stages of macropinocytosis by dephosphorylating phosphatidylinositol 3,4-bisphosphate in membrane ruffles. Antagonizes the PI3K-AKT/PKB signaling pathway by dephosphorylating phosphoinositides and thereby modulating cell cycle progression and cell survival. This Pongo abelii (Sumatran orangutan) protein is Type II inositol 3,4-bisphosphate 4-phosphatase (INPP4B).